The sequence spans 538 residues: Guanine nucleotide-binding protein-like 3 (538 aa).

Positions 1 to 45 are enriched in basic residues; the sequence is MKRPKLKKASKRMTCHKRYKIQKKVREHHRKLRKEAKKRGHKKPK. Residues 1–125 form a disordered region; sequence MKRPKLKKAS…KAKSGKQNPK (125 aa). The tract at residues 2-46 is basic; that stretch reads KRPKLKKASKRMTCHKRYKIQKKVREHHRKLRKEAKKRGHKKPKK. Positions 54-95 form a coiled coil; that stretch reads APFKEALLREAELRKQQLEELKQQQKLDRQKEQERKRKLEIS. Residues 59-94 show a composition bias toward basic and acidic residues; it reads ALLREAELRKQQLEELKQQQKLDRQKEQERKRKLEI. Lys-79 is subject to N6-acetyllysine. A Glycyl lysine isopeptide (Lys-Gly) (interchain with G-Cter in SUMO2) cross-link involves residue Lys-91. Ser-95 and Ser-101 each carry phosphoserine. Acidic residues predominate over residues 95 to 110; it reads SPDDEQSNVETQEESD. Over residues 115-125 the composition is skewed to basic residues; sequence KKAKSGKQNPK. Residues 129 to 307 enclose the CP-type G domain; that stretch reads CQELKKVIEA…IIDSPCFIIS (179 aa). GTP is bound at residue 176–179; sequence NKSD. Residues Lys-177, Lys-248, Lys-262, and Lys-270 each participate in a glycyl lysine isopeptide (Lys-Gly) (interchain with G-Cter in SUMO2) cross-link. A GTP-binding site is contributed by 256–263; it reads GFPNVGKS. Residues 277–451 are intermediate; it reads VGVSMGLTRS…HLTNKILFRS (175 aa). 300 to 303 is a binding site for GTP; that stretch reads DSPC. Basic and acidic residues-rich tracts occupy residues 460–473 and 481–491; these read EEKD…KQTE and QEHVTGEKNAE. Residues 460-532 are acidic; it reads EEKDIPEESP…KMSEEDDAYD (73 aa). The interval 460–538 is disordered; the sequence is EEKDIPEESP…DAYDFTTDYI (79 aa). A phosphoserine mark is found at Ser-493, Ser-505, and Ser-518. The span at 514–524 shows a compositional bias: basic and acidic residues; that stretch reads PSDRSFILDKM.

It belongs to the TRAFAC class YlqF/YawG GTPase family. Interacts with MDM2; this interaction stabilizes MDM2. Interaction with MDM2 occurs in the nucleoplasm and is triggered by a nucleolar release mechanism, such as mitosis-induced nucleolar disassembly. May interact with p53/TP53 via its basic domain. This interaction is most probably indirect and mediated by MDM2-binding. In terms of tissue distribution, expressed in testis.

The protein localises to the nucleus. Its subcellular location is the nucleolus. May be required to maintain the proliferative capacity of stem cells. Stabilizes MDM2 by preventing its ubiquitination, and hence proteasomal degradation. The polypeptide is Guanine nucleotide-binding protein-like 3 (Gnl3) (Rattus norvegicus (Rat)).